We begin with the raw amino-acid sequence, 50 residues long: Photosystem I reaction center subunit IX (50 aa).

The chain crosses the membrane as a helical span at residues 7 to 27 (YLSTAPVLAILCCSFLAGLVI).

Belongs to the PsaJ family.

The protein resides in the plastid. It is found in the chloroplast thylakoid membrane. Functionally, may help in the organization of the PsaE and PsaF subunits. The chain is Photosystem I reaction center subunit IX from Pinus koraiensis (Korean pine).